The sequence spans 270 residues: Metallo-beta-lactamase type 2 (270 aa).

The signal sequence occupies residues 1–28 (MELPNIMHPVAKLSTALAAALMLSGCMP). Residues His-120, His-122, Asp-124, His-189, and Cys-208 each contribute to the Zn(2+) site. Substrate contacts are provided by Lys-211 and Asn-220. Residue His-250 coordinates Zn(2+).

This sequence belongs to the metallo-beta-lactamase superfamily. Class-B beta-lactamase family. Monomer. The cofactor is Zn(2+).

It is found in the periplasm. It carries out the reaction a beta-lactam + H2O = a substituted beta-amino acid. With respect to regulation, inhibits by captopril, thiorphan, dimercaprol and tiopronin. This enzyme is not susceptible to inactivation by the beta-lactamase-blocking agents clavulanic acid. Functionally, confers resistance to the different beta-lactams antibiotics (penicillin, cephalosporin and carbapenem) via the hydrolysis of the beta-lactam ring. Does not confer resistance to the polymixin colistin or the fluoroquinolone ciprofloxacin. The chain is Metallo-beta-lactamase type 2 from Klebsiella pneumoniae.